We begin with the raw amino-acid sequence, 334 residues long: MASRRRKLRNFLNKECIWTVNPMSGDHIKVFNACTSISPVYDPELVTSYALSVPAYNVSVAILLHKVMGPCVAVGINGEMIMYVVSQCVSVRPVPGRDGMALIYFGQFLEEASGLRFPYIAPPPSREHVPDLTRQELVHTSQVVRRGDLTNCTMGLEFRNVNPFVWLGGGSVWLLFLGVDYMAFCPGVDGMPSLARVAALLTRCDHPDCVHCHGLRGHVNVFRGYCSAQSPGLSNICPCIKSCGTGNGVTRVTGNRNFLGLLFDPIVQSRVTALKITSHPTPTHVENVLTGVLDDGTLVPSSKAPWVLLRMSDYFSRLLIYECKKLKALGLRSY.

Belongs to the herpesviridae cytoplasmic envelopment protein 2 family. In terms of assembly, interacts with cytoplasmic envelopment protein 3 and with the capsid.

The protein localises to the virion tegument. It is found in the host cytoplasm. It localises to the host nucleus. Plays a critical role in cytoplasmic virus egress. Participates in the final step of tegumentation and envelope acquisition within the host cytoplasm by directly interacting with the capsid. Upon virion binding to target cell, a signaling cascade is triggered to disrupt the interaction with the capsid, thereby preparing capsid uncoating. This Homo sapiens (Human) protein is Cytoplasmic envelopment protein 2 (ORF33).